The chain runs to 492 residues: Cytochrome P450 2L1 (492 aa).

Cys436 contributes to the heme binding site.

Belongs to the cytochrome P450 family. Heme is required as a cofactor.

The protein resides in the endoplasmic reticulum membrane. Its subcellular location is the microsome membrane. It carries out the reaction an organic molecule + reduced [NADPH--hemoprotein reductase] + O2 = an alcohol + oxidized [NADPH--hemoprotein reductase] + H2O + H(+). Efficient in catalyzing the monooxygenation of benzphetamine, aminopyrine, benzo(a)pyrene, progesterone, and testosterone. The chain is Cytochrome P450 2L1 (CYP2L1) from Panulirus argus (Caribbean spiny lobster).